A 141-amino-acid polypeptide reads, in one-letter code: Large ribosomal subunit protein uL11 (141 aa).

It belongs to the universal ribosomal protein uL11 family. Part of the ribosomal stalk of the 50S ribosomal subunit. Interacts with L10 and the large rRNA to form the base of the stalk. L10 forms an elongated spine to which L12 dimers bind in a sequential fashion forming a multimeric L10(L12)X complex. Post-translationally, one or more lysine residues are methylated.

In terms of biological role, forms part of the ribosomal stalk which helps the ribosome interact with GTP-bound translation factors. The polypeptide is Large ribosomal subunit protein uL11 (Chlorobium phaeobacteroides (strain BS1)).